The following is a 299-amino-acid chain: Beta-lactamase VEB-1 (299 aa).

The signal sequence occupies residues 1-23 (MKIVKRILLVLLSLFFTIVYSNA). Residue S68 is the Nucleophile; acyl-ester intermediate of the active site. Residues K71, S131, and E167 each contribute to the a beta-lactam site. The active-site Proton acceptor is E167.

This sequence belongs to the class-A beta-lactamase family.

It carries out the reaction a beta-lactam + H2O = a substituted beta-amino acid. Inhibited by the beta-lactamase-blocking agent clavulanic acid. Its function is as follows. Class A beta-lactamase which confers resistance to the beta-lactam antibiotics, including penicillins and cephalosporins, in E.coli strain JM109. Acts via hydrolysis of the beta-lactam ring. Has penicillin-, and cephalosporin-hydrolyzing activities. In Pseudomonas aeruginosa, this protein is Beta-lactamase VEB-1.